A 247-amino-acid chain; its full sequence is Neurotrophic factor BDNF precursor form (247 aa).

An N-terminal signal peptide occupies residues 1-18 (MTILFLTMVISYFGCMKA). Residues 19–128 (APMKEANVRG…AANMSMRVRR (110 aa)) constitute a propeptide that is removed on maturation. N-linked (GlcNAc...) asparagine glycosylation is present at asparagine 121. Cystine bridges form between cysteine 141/cysteine 208, cysteine 186/cysteine 237, and cysteine 196/cysteine 239.

Belongs to the NGF-beta family. In terms of assembly, monomers and homodimers. Binds to NTRK2/TRKB. Can form heterodimers with other neurotrophin family members, such as NTF3 and NTF4 (in vitro), but the physiological relevance of this is not clear. BDNF precursor form: interacts with the heterodimer formed by NGFR and SORCS2. Mature BDNF has much lower affinity for the heterodimer formed by NGFR and SORCS2. Post-translationally, N-glycosylated and glycosulfated, contrary to mature BDNF. Mature BDNF is produced by proteolytic removal of the propeptide, catalyzed by a FURIN family member. In addition, the precursor form is proteolytically cleaved within the propeptide, but this is not an obligatory intermediate for the production of mature BDNF. Can be converted into mature BDNF by plasmin (PLG).

The protein localises to the secreted. Functionally, important signaling molecule that activates signaling cascades downstream of NTRK2. During development, promotes the survival and differentiation of selected neuronal populations of the peripheral and central nervous systems. Participates in axonal growth, pathfinding and in the modulation of dendritic growth and morphology. Major regulator of synaptic transmission and plasticity at adult synapses in many regions of the CNS. The versatility of BDNF is emphasized by its contribution to a range of adaptive neuronal responses including long-term potentiation (LTP), long-term depression (LTD), certain forms of short-term synaptic plasticity, as well as homeostatic regulation of intrinsic neuronal excitability. Its function is as follows. Important signaling molecule that activates signaling cascades downstream of NTRK2. Activates signaling cascades via the heterodimeric receptor formed by NGFR and SORCS2. Signaling via NGFR and SORCS2 plays a role in synaptic plasticity and long-term depression (LTD). Binding to NGFR and SORCS2 promotes neuronal apoptosis. Promotes neuronal growth cone collapse. This is Neurotrophic factor BDNF precursor form (BDNF) from Ailurus fulgens (Himalayan red panda).